Reading from the N-terminus, the 549-residue chain is Glucose-6-phosphate isomerase (549 aa).

E355 functions as the Proton donor in the catalytic mechanism. Residues H386 and K514 contribute to the active site.

The protein belongs to the GPI family.

It is found in the cytoplasm. The catalysed reaction is alpha-D-glucose 6-phosphate = beta-D-fructose 6-phosphate. The protein operates within carbohydrate biosynthesis; gluconeogenesis. It functions in the pathway carbohydrate degradation; glycolysis; D-glyceraldehyde 3-phosphate and glycerone phosphate from D-glucose: step 2/4. Its function is as follows. Catalyzes the reversible isomerization of glucose-6-phosphate to fructose-6-phosphate. The chain is Glucose-6-phosphate isomerase from Salmonella gallinarum (strain 287/91 / NCTC 13346).